The chain runs to 393 residues: Isocitrate dehydrogenase [NAD] subunit gamma 1, mitochondrial (393 aa).

The N-terminal 39 residues, 1 to 39 (MALKVAIAAGSAAKAIFKPALLCRPWEVLAAHEAPRRSI), are a transit peptide targeting the mitochondrion. Thr-120 lines the citrate pocket. Residue Ser-130 is modified to Phosphoserine. Asn-133 contacts citrate. The substrate site is built by Arg-136 and Arg-167. Lys-206 carries the post-translational modification N6-acetyllysine. Lys-226 bears the N6-succinyllysine mark. Residue Asp-254 participates in substrate binding. Mn(2+) is bound at residue Asp-254. Residues Asn-312, Thr-313, and Asn-324 each contribute to the ADP site.

The protein belongs to the isocitrate and isopropylmalate dehydrogenases family. As to quaternary structure, heterooligomer of subunits alpha (IDH3A), beta (IDH3B), and gamma (IDH3G) in the apparent ratio of 2:1:1. The heterodimer containing one IDH3A and one IDH3B subunit and the heterodimer containing one IDH3A and one IDH3G subunit assemble into a heterotetramer (which contains two subunits of IDH3A, one of IDH3B and one of IDH3G) and further into the heterooctamer. Requires Mg(2+) as cofactor. Mn(2+) is required as a cofactor.

It localises to the mitochondrion. With respect to regulation, the heterotetramer and the heterodimer composed of IDH3A and IDH3G subunits can be allosterically activated by citrate (CIT) or/and ADP, and the two activators can act independently or synergistically. The heterodimer composed of IDH3A and IDH3B subunits cannot be allosterically regulated and the allosteric regulation of the heterotetramer is through the IDH3G subunit and not the IDH3B subunit. The IDH3G subunit contains the allosteric site which consists of a CIT-binding site and an ADP-binding site, and the binding of CIT and ADP causes conformational changes at the allosteric site which are transmitted to the active site in the catalytic subunit (IDH3A) through a cascade of conformational changes at the heterodimer interface, leading to stabilization of the isocitrate-binding at the active site and thus activation of the enzyme. ATP can activate the heterotetramer and the heterodimer composed of IDH3A and IDH3G subunits at low concentrations but inhibits their activities at high concentrations, whereas ATP exhibits only inhibitory effect on the heterodimer composed of IDH3A and IDH3B subunits. Regulatory subunit which plays a role in the allosteric regulation of the enzyme catalyzing the decarboxylation of isocitrate (ICT) into alpha-ketoglutarate. The heterodimer composed of the alpha (IDH3A) and beta (IDH3B) subunits and the heterodimer composed of the alpha (IDH3A) and gamma (IDH3G) subunits, have considerable basal activity but the full activity of the heterotetramer (containing two subunits of IDH3A, one of IDH3B and one of IDH3G) requires the assembly and cooperative function of both heterodimers. This Rattus norvegicus (Rat) protein is Isocitrate dehydrogenase [NAD] subunit gamma 1, mitochondrial (Idh3g).